Reading from the N-terminus, the 406-residue chain is NIPA-like protein 3 (406 aa).

4 helical membrane passes run asparagine 33 to leucine 53, tryptophan 76 to phenylalanine 96, leucine 101 to isoleucine 121, and isoleucine 135 to alanine 155. N-linked (GlcNAc...) asparagine glycosylation is present at asparagine 166. Helical transmembrane passes span leucine 171–leucine 191, isoleucine 202–alanine 222, proline 240–leucine 260, leucine 271–phenylalanine 291, and valine 300–isoleucine 320. Serine 372 carries the post-translational modification Phosphoserine.

This sequence belongs to the NIPA family.

The protein localises to the membrane. This chain is NIPA-like protein 3 (NIPAL3), found in Pongo abelii (Sumatran orangutan).